Consider the following 332-residue polypeptide: L-lactate dehydrogenase A chain (332 aa).

Residues 29 to 57 (GAVG…VEDK) and Arg99 each bind NAD(+). 3 residues coordinate substrate: Arg106, Asn138, and Arg169. NAD(+) is bound at residue Asn138. His193 serves as the catalytic Proton acceptor. Residue Thr248 participates in substrate binding.

It belongs to the LDH/MDH superfamily. LDH family. In terms of assembly, homotetramer.

It localises to the cytoplasm. It carries out the reaction (S)-lactate + NAD(+) = pyruvate + NADH + H(+). The protein operates within fermentation; pyruvate fermentation to lactate; (S)-lactate from pyruvate: step 1/1. Functionally, interconverts simultaneously and stereospecifically pyruvate and lactate with concomitant interconversion of NADH and NAD(+). The protein is L-lactate dehydrogenase A chain (LDHA) of Caiman crocodilus apaporiensis (Rio Apaporis caiman).